Consider the following 180-residue polypeptide: Methionine-R-sulfoxide reductase B2, mitochondrial (180 aa).

Residues 1–41 constitute a mitochondrion transit peptide; the sequence is MSRFLVRLSTVVSKGATGKSVLPQKRIFAGIRLISSSTGLQ. One can recognise a MsrB domain in the interval 49 to 178; it reads STDWQRKLSP…NSVALNFKPR (130 aa). 4 residues coordinate Zn(2+): C88, C91, C144, and C147. Residue C167 is the Nucleophile of the active site.

This sequence belongs to the MsrB Met sulfoxide reductase family. Zn(2+) is required as a cofactor.

The protein localises to the mitochondrion. It carries out the reaction L-methionyl-[protein] + [thioredoxin]-disulfide + H2O = L-methionyl-(R)-S-oxide-[protein] + [thioredoxin]-dithiol. The enzyme catalyses [thioredoxin]-disulfide + L-methionine + H2O = L-methionine (R)-S-oxide + [thioredoxin]-dithiol. Methionine-sulfoxide reductase that specifically reduces methionine (R)-sulfoxide back to methionine. While in many cases, methionine oxidation is the result of random oxidation following oxidative stress, methionine oxidation is also a post-translational modification that takes place on specific residue. Upon oxidative stress, may play a role in the preservation of mitochondrial integrity by decreasing the intracellular reactive oxygen species build-up through its scavenging role, hence contributing to cell survival and protein maintenance. This Danio rerio (Zebrafish) protein is Methionine-R-sulfoxide reductase B2, mitochondrial (msrb2).